Consider the following 290-residue polypeptide: Nucleotide-binding protein BPP4038 (290 aa).

Residue 9 to 16 (GISGSGKS) participates in ATP binding. 58–61 (DVRS) provides a ligand contact to GTP.

Belongs to the RapZ-like family.

Its function is as follows. Displays ATPase and GTPase activities. The chain is Nucleotide-binding protein BPP4038 from Bordetella parapertussis (strain 12822 / ATCC BAA-587 / NCTC 13253).